Here is a 448-residue protein sequence, read N- to C-terminus: Exodeoxyribonuclease 7 large subunit (448 aa).

It belongs to the XseA family. As to quaternary structure, heterooligomer composed of large and small subunits.

The protein localises to the cytoplasm. The enzyme catalyses Exonucleolytic cleavage in either 5'- to 3'- or 3'- to 5'-direction to yield nucleoside 5'-phosphates.. Functionally, bidirectionally degrades single-stranded DNA into large acid-insoluble oligonucleotides, which are then degraded further into small acid-soluble oligonucleotides. The sequence is that of Exodeoxyribonuclease 7 large subunit from Shewanella sp. (strain MR-7).